The chain runs to 313 residues: Ribosomal RNA small subunit methyltransferase H (313 aa).

Residues 51 to 53 (GGH), aspartate 71, phenylalanine 98, aspartate 119, and glutamine 126 each bind S-adenosyl-L-methionine. The tract at residues 293–313 (EEQRANPRSRSARLRVAERVS) is disordered.

Belongs to the methyltransferase superfamily. RsmH family.

Its subcellular location is the cytoplasm. It catalyses the reaction cytidine(1402) in 16S rRNA + S-adenosyl-L-methionine = N(4)-methylcytidine(1402) in 16S rRNA + S-adenosyl-L-homocysteine + H(+). Specifically methylates the N4 position of cytidine in position 1402 (C1402) of 16S rRNA. This chain is Ribosomal RNA small subunit methyltransferase H, found in Roseiflexus sp. (strain RS-1).